We begin with the raw amino-acid sequence, 444 residues long: MSQSYINVVGAGLAGSEAAYQIAKRGIPVKLYEMRGVKRTPQHKTSNFAELVCSNSFRGDSLTNAVGLLKEEMRRLDSIIMRTGEAHRVPAGGAMAVDRSGYAQAVTAELENNPLIQVIRNEVTEIPDDAITVIATGPLTSDSLAKKIYKLNGGEGFYFYDAAAPIVDQSSIDMDKVYLKSRYDKGEAAYLNCPMTKEEFIRFYEALINAEEAPFNSFEREKYFEGCMPIEVMAKRGIKTLLYGPMKPVGLEYPQDYKGPRDGDYKAPYAVVQLRQDNAAGSLYNIVGFQTHLKWSEQKRVFSMIPGLEQAHFVRYGVMHRNSYIDSPNLLAPTFATCKNPNLFFAGQMTGVEGYVESAASGLVAGINAVRRFKDEEAVIFPQTTAIGALPYYITHTKSKHFQPMNINFGIIKDLGGPRIRDKKKRYEKIAERSLKDLQQFLTV.

FAD is bound at residue 10 to 15 (GAGLAG).

It belongs to the MnmG family. TrmFO subfamily. FAD is required as a cofactor.

The protein localises to the cytoplasm. The enzyme catalyses uridine(54) in tRNA + (6R)-5,10-methylene-5,6,7,8-tetrahydrofolate + NADH + H(+) = 5-methyluridine(54) in tRNA + (6S)-5,6,7,8-tetrahydrofolate + NAD(+). The catalysed reaction is uridine(54) in tRNA + (6R)-5,10-methylene-5,6,7,8-tetrahydrofolate + NADPH + H(+) = 5-methyluridine(54) in tRNA + (6S)-5,6,7,8-tetrahydrofolate + NADP(+). In terms of biological role, catalyzes the folate-dependent formation of 5-methyl-uridine at position 54 (M-5-U54) in all tRNAs. The protein is Methylenetetrahydrofolate--tRNA-(uracil-5-)-methyltransferase TrmFO of Streptococcus mutans serotype c (strain ATCC 700610 / UA159).